The sequence spans 333 residues: Nucleoid-associated protein VV1_3120 (333 aa).

This sequence belongs to the YejK family.

The protein resides in the cytoplasm. It is found in the nucleoid. The protein is Nucleoid-associated protein VV1_3120 of Vibrio vulnificus (strain CMCP6).